A 614-amino-acid chain; its full sequence is Vitamin B12 transporter BtuB (614 aa).

Positions 1–20 (MIKKATLLTAFSVTAFSAWA) are cleaved as a signal peptide. The TonB box motif lies at 26 to 33 (DTLVVTAN). In terms of domain architecture, TBDR plug spans 38–152 (PRSAVLAPVT…IGGVVNIITT (115 aa)). Residues serine 85, asparagine 92, and 110 to 111 (VS) contribute to the cyanocob(III)alamin site. The TBDR beta-barrel domain occupies 155-614 (NPGTELTAGW…EYTLSGSYTF (460 aa)). 3 consecutive transmembrane segments (beta stranded) span residues 158 to 165 (TELTAGWG), 169 to 178 (YQNYDISTQQ), and 184 to 195 (TRATLIGDYEYT). Ca(2+) is bound by residues aspartate 199, glutamine 211, aspartate 213, and aspartate 215. The next 2 membrane-spanning stretches (beta stranded) occupy residues 217-227 (FLSKTLYGALE) and 232-248 (DRWS…NRTD). 2 residues coordinate Ca(2+): tyrosine 249 and aspartate 250. A cyanocob(III)alamin-binding site is contributed by alanine 251. Aspartate 261 contacts Ca(2+). The next 14 membrane-spanning stretches (beta stranded) occupy residues 263 to 277 (RKLY…LHFN), 279 to 296 (ERIQ…KDYN), 309 to 325 (TLDE…NSVV), 328 to 337 (HGNVGAGVDW), 353 to 369 (YDQR…QQLG), 371 to 381 (FTLEAAARSDD), 385 to 400 (FGRH…WEFI), 403 to 417 (YRFI…KAPN), 434 to 443 (KSKQWEGAFE), 449 to 458 (VSWRISGYRN), 473 to 490 (YYNE…TANF), 494 to 509 (PLTH…ARNA), 517 to 529 (RRSK…QLDW), and 535 to 550 (DWGM…YDSD). Threonine 309 serves as a coordination point for cyanocob(III)alamin. A cyanocob(III)alamin-binding site is contributed by arginine 517. Tyrosine 551 is a cyanocob(III)alamin binding site. 3 consecutive transmembrane segments (beta stranded) span residues 558 to 572 (TVKM…LTVA), 585 to 596 (IANLFDKDYETV), and 602 to 614 (AGRE…SYTF). The TonB C-terminal box signature appears at 597–614 (YGYQTAGREYTLSGSYTF).

It belongs to the TonB-dependent receptor family. BtuB (TC 1.B.14.3.1) subfamily.

Its subcellular location is the cell outer membrane. Functionally, involved in the active translocation of vitamin B12 (cyanocobalamin) across the outer membrane to the periplasmic space. It derives its energy for transport by interacting with the trans-periplasmic membrane protein TonB. The chain is Vitamin B12 transporter BtuB from Salmonella typhimurium (strain LT2 / SGSC1412 / ATCC 700720).